Reading from the N-terminus, the 1051-residue chain is Outer capsid protein VP2 (1051 aa).

The protein belongs to the orbivirus VP2 family.

It is found in the virion. The VP2 protein is one of the two proteins (with VP5) which constitute the virus particle outer capsid. It is the major target of the host immunogenic response. The polypeptide is Outer capsid protein VP2 (Segment-2) (African horse sickness virus (AHSV)).